A 505-amino-acid chain; its full sequence is L-carnitine/gamma-butyrobetaine antiporter (505 aa).

12 helical membrane passes run 10–30, 51–71, 92–112, 143–163, 195–215, 231–251, 263–283, 316–336, 347–367, 403–423, 446–466, and 475–495; these read IEPK…WLTV, WGWA…WLVF, IFMM…SIEI, GPLP…FFFV, FYLV…TPLV, LDAI…ACGL, SYLS…SFIM, WTVF…IFLA, LCFG…TVLG, LSTA…VTLI, LLVR…LLAL, and AIIA…LSFI.

It belongs to the BCCT transporter (TC 2.A.15) family. CaiT subfamily. In terms of assembly, homotrimer.

The protein localises to the cell inner membrane. It carries out the reaction 4-(trimethylamino)butanoate(in) + (R)-carnitine(out) = 4-(trimethylamino)butanoate(out) + (R)-carnitine(in). The protein operates within amine and polyamine metabolism; carnitine metabolism. Catalyzes the exchange of L-carnitine for gamma-butyrobetaine. The polypeptide is L-carnitine/gamma-butyrobetaine antiporter (Salmonella paratyphi A (strain ATCC 9150 / SARB42)).